The chain runs to 377 residues: 3-dehydroquinate synthase (377 aa).

NAD(+) contacts are provided by residues 115–119 (GVIGD), 139–140 (TS), Lys152, and Lys162. Zn(2+) contacts are provided by Glu195, His257, and His276.

Belongs to the sugar phosphate cyclases superfamily. Dehydroquinate synthase family. Co(2+) serves as cofactor. The cofactor is Zn(2+). Requires NAD(+) as cofactor.

Its subcellular location is the cytoplasm. It carries out the reaction 7-phospho-2-dehydro-3-deoxy-D-arabino-heptonate = 3-dehydroquinate + phosphate. It functions in the pathway metabolic intermediate biosynthesis; chorismate biosynthesis; chorismate from D-erythrose 4-phosphate and phosphoenolpyruvate: step 2/7. Functionally, catalyzes the conversion of 3-deoxy-D-arabino-heptulosonate 7-phosphate (DAHP) to dehydroquinate (DHQ). The protein is 3-dehydroquinate synthase of Rhizobium etli (strain ATCC 51251 / DSM 11541 / JCM 21823 / NBRC 15573 / CFN 42).